The primary structure comprises 418 residues: Light-independent protochlorophyllide reductase subunit N (418 aa).

Cys-17, Cys-42, and Cys-103 together coordinate [4Fe-4S] cluster.

Belongs to the BchN/ChlN family. Protochlorophyllide reductase is composed of three subunits; ChlL, ChlN and ChlB. Forms a heterotetramer of two ChlB and two ChlN subunits. The cofactor is [4Fe-4S] cluster.

It carries out the reaction chlorophyllide a + oxidized 2[4Fe-4S]-[ferredoxin] + 2 ADP + 2 phosphate = protochlorophyllide a + reduced 2[4Fe-4S]-[ferredoxin] + 2 ATP + 2 H2O. Its pathway is porphyrin-containing compound metabolism; chlorophyll biosynthesis (light-independent). In terms of biological role, component of the dark-operative protochlorophyllide reductase (DPOR) that uses Mg-ATP and reduced ferredoxin to reduce ring D of protochlorophyllide (Pchlide) to form chlorophyllide a (Chlide). This reaction is light-independent. The NB-protein (ChlN-ChlB) is the catalytic component of the complex. This chain is Light-independent protochlorophyllide reductase subunit N, found in Prochlorococcus marinus (strain MIT 9215).